The following is a 232-amino-acid chain: Histone H1B (232 aa).

Low complexity predominate over residues 1–18 (MSDPAVEVTPAVPVASPA). Disordered regions lie at residues 1-44 (MSDP…PPVS) and 99-232 (QTKG…AKKA). An H15 domain is found at 39-113 (THPPVSEMVV…GASGSFKLPA (75 aa)). Basic residues-rich tracts occupy residues 132-141 (KPKKAAAKPK), 147-173 (KVKK…KTTK), 181-197 (AAKK…KPKA), 205-214 (KRAAAPKAKK), and 222-232 (KAAKKPAAKKA).

It belongs to the histone H1/H5 family.

The protein resides in the nucleus. The protein localises to the chromosome. In terms of biological role, histones H1 are necessary for the condensation of nucleosome chains into higher-order structures. This is Histone H1B from Chironomus tentans (Midge).